Reading from the N-terminus, the 58-residue chain is Cecropin-B (58 aa).

The signal sequence occupies residues 1–21 (ILSFVFACLLALSAVSAAPEP).

Belongs to the cecropin family.

It localises to the secreted. Cecropins have lytic and antibacterial activity against several Gram-positive and Gram-negative bacteria. The sequence is that of Cecropin-B (CECB) from Spodoptera litura (Asian cotton leafworm).